The sequence spans 488 residues: Glutamyl-tRNA(Gln) amidotransferase subunit A (488 aa).

Residues lysine 77 and serine 152 each act as charge relay system in the active site. Serine 176 serves as the catalytic Acyl-ester intermediate.

The protein belongs to the amidase family. GatA subfamily. In terms of assembly, heterotrimer of A, B and C subunits.

The enzyme catalyses L-glutamyl-tRNA(Gln) + L-glutamine + ATP + H2O = L-glutaminyl-tRNA(Gln) + L-glutamate + ADP + phosphate + H(+). Functionally, allows the formation of correctly charged Gln-tRNA(Gln) through the transamidation of misacylated Glu-tRNA(Gln) in organisms which lack glutaminyl-tRNA synthetase. The reaction takes place in the presence of glutamine and ATP through an activated gamma-phospho-Glu-tRNA(Gln). The chain is Glutamyl-tRNA(Gln) amidotransferase subunit A from Streptococcus pneumoniae (strain 70585).